A 146-amino-acid polypeptide reads, in one-letter code: Phospholipase A2, membrane associated (146 aa).

Positions 1–21 are cleaved as a signal peptide; sequence MKVLLLLAVVIMAFGSIQVQG. Cystine bridges form between cysteine 47/cysteine 139, cysteine 49/cysteine 65, cysteine 64/cysteine 119, cysteine 70/cysteine 146, cysteine 71/cysteine 112, cysteine 80/cysteine 105, and cysteine 98/cysteine 110. Ca(2+) contacts are provided by histidine 48, glycine 50, and glycine 52. Histidine 68 is a catalytic residue. Aspartate 69 provides a ligand contact to Ca(2+). Aspartate 113 is an active-site residue.

This sequence belongs to the phospholipase A2 family. Ca(2+) is required as a cofactor.

Its subcellular location is the secreted. The protein resides in the cell membrane. It is found in the mitochondrion outer membrane. It carries out the reaction a 1,2-diacyl-sn-glycero-3-phosphoethanolamine + H2O = a 1-acyl-sn-glycero-3-phosphoethanolamine + a fatty acid + H(+). The enzyme catalyses 1-hexadecanoyl-2-(9Z-octadecenoyl)-sn-glycero-3-phosphoethanolamine + H2O = 1-hexadecanoyl-sn-glycero-3-phosphoethanolamine + (9Z)-octadecenoate + H(+). The catalysed reaction is 1-hexadecanoyl-2-(9Z,12Z-octadecadienoyl)-sn-glycero-3-phosphoethanolamine + H2O = 1-hexadecanoyl-sn-glycero-3-phosphoethanolamine + (9Z,12Z)-octadecadienoate + H(+). It catalyses the reaction 1-hexadecanoyl-2-(5Z,8Z,11Z,14Z-eicosatetraenoyl)-sn-glycero-3-phosphoethanolamine + H2O = 1-hexadecanoyl-sn-glycero-3-phosphoethanolamine + (5Z,8Z,11Z,14Z)-eicosatetraenoate + H(+). It carries out the reaction N-hexadecanoyl-1,2-di-(9Z-octadecenoyl)-sn-glycero-3-phosphoethanolamine + H2O = N-hexadecanoyl-1-(9Z-octadecenoyl)-sn-glycero-3-phosphoethanolamine + (9Z)-octadecenoate + H(+). The enzyme catalyses 1,2-dihexadecanoyl-sn-glycero-3-phospho-(1'-sn-glycerol) + H2O = 1-hexadecanoyl-sn-glycero-3-phospho-(1'-sn-glycerol) + hexadecanoate + H(+). The catalysed reaction is 1-hexadecanoyl-2-(9Z-octadecenoyl)-sn-glycero-3-phosphoglycerol + H2O = 1-hexadecanoyl-sn-glycero-3-phosphoglycerol + (9Z)-octadecenoate + H(+). It catalyses the reaction 1-hexadecanoyl-2-(9Z-octadecenoyl)-sn-glycero-3-phospho-(1'-sn-glycerol) + H2O = 1-hexadecanoyl-sn-glycero-3-phospho-(1'-sn-glycerol) + (9Z)-octadecenoate + H(+). It carries out the reaction a 1,2-diacyl-sn-glycero-3-phosphocholine + H2O = a 1-acyl-sn-glycero-3-phosphocholine + a fatty acid + H(+). The enzyme catalyses 1,2-dihexadecanoyl-sn-glycero-3-phosphocholine + H2O = 1-hexadecanoyl-sn-glycero-3-phosphocholine + hexadecanoate + H(+). The catalysed reaction is 1-hexadecanoyl-2-(9Z-octadecenoyl)-sn-glycero-3-phosphocholine + H2O = 1-hexadecanoyl-sn-glycero-3-phosphocholine + (9Z)-octadecenoate + H(+). It catalyses the reaction 1-hexadecanoyl-2-(9Z,12Z-octadecadienoyl)-sn-glycero-3-phosphocholine + H2O = (9Z,12Z)-octadecadienoate + 1-hexadecanoyl-sn-glycero-3-phosphocholine + H(+). It carries out the reaction 1-hexadecanoyl-2-(4Z,7Z,10Z,13Z,16Z,19Z-docosahexaenoyl)-sn-glycero-3-phosphocholine + H2O = (4Z,7Z,10Z,13Z,16Z,19Z)-docosahexaenoate + 1-hexadecanoyl-sn-glycero-3-phosphocholine + H(+). Its function is as follows. Secretory calcium-dependent phospholipase A2 that primarily targets extracellular phospholipids with implications in host antimicrobial defense, inflammatory response and tissue regeneration. Hydrolyzes the ester bond of the fatty acyl group attached at sn-2 position of phospholipids (phospholipase A2 activity) with preference for phosphatidylethanolamines and phosphatidylglycerols over phosphatidylcholines. Contributes to lipid remodeling of cellular membranes and generation of lipid mediators involved in pathogen clearance. Displays bactericidal activity against Gram-positive bacteria by directly hydrolyzing phospholipids of the bacterial membrane. Upon sterile inflammation, targets membrane phospholipids of extracellular mitochondria released from activated platelets, generating free unsaturated fatty acids such as arachidonate that is used by neighboring leukocytes to synthesize inflammatory eicosanoids such as leukotrienes. Simultaneously, by compromising mitochondrial membrane integrity, promotes the release in circulation of potent damage-associated molecular pattern molecules that activate the innate immune response. Plays a stem cell regulator role in the intestinal crypt. Within intracellular compartment mediates Paneth cell differentiation and its stem cell supporting functions by inhibiting Wnt signaling pathway in intestinal stem cell (ICS). Secreted in the intestinal lumen upon inflammation, acts in an autocrine way and promotes prostaglandin E2 synthesis that stimulates Wnt signaling pathway in ICS cells and tissue regeneration. May play a role in the biosynthesis of N-acyl ethanolamines that regulate energy metabolism and inflammation. Hydrolyzes N-acyl phosphatidylethanolamines to N-acyl lysophosphatidylethanolamines, which are further cleaved by a lysophospholipase D to release N-acyl ethanolamines. Independent of its catalytic activity, acts as a ligand for integrins. Binds to and activates integrins ITGAV:ITGB3, ITGA4:ITGB1 and ITGA5:ITGB1. Binds to a site (site 2) which is distinct from the classical ligand-binding site (site 1) and induces integrin conformational changes and enhanced ligand binding to site 1. Induces cell proliferation in an integrin-dependent manner. The sequence is that of Phospholipase A2, membrane associated (Pla2g2a) from Rattus norvegicus (Rat).